The primary structure comprises 396 residues: Elongation factor Tu (396 aa).

The tr-type G domain maps to 10–206 (KPHVNVGTIG…TMDSYIPEPV (197 aa)). The G1 stretch occupies residues 19–26 (GHVDHGKT). 19–26 (GHVDHGKT) contacts GTP. A Mg(2+)-binding site is contributed by Thr-26. A G2 region spans residues 60–64 (GITIS). The G3 stretch occupies residues 81-84 (DCPG). GTP is bound by residues 81 to 85 (DCPGH) and 136 to 139 (NKAD). The tract at residues 136 to 139 (NKAD) is G4. The tract at residues 174–176 (SAL) is G5.

This sequence belongs to the TRAFAC class translation factor GTPase superfamily. Classic translation factor GTPase family. EF-Tu/EF-1A subfamily. As to quaternary structure, monomer.

It is found in the cytoplasm. The enzyme catalyses GTP + H2O = GDP + phosphate + H(+). Functionally, GTP hydrolase that promotes the GTP-dependent binding of aminoacyl-tRNA to the A-site of ribosomes during protein biosynthesis. The chain is Elongation factor Tu from Legionella pneumophila (strain Lens).